The chain runs to 304 residues: MNAPDSTLVKAFLLDLQHRICNGLEALDGSAKFAEDAWKREEGGGGQSRVLTGGTVFEQAGVNFSHVMGASMPASATAHRPELAGRSFEAMGVSLVIHPNNPHIPTTHANVRFFIAHKDGADPVWWFGGGFDLTPYYPYLEDVVEWHQSAKSLCEPFGDEIYPEYKQWCDEYFFLPHRNETRGVGGLFFDDLNKQGFDTSFAFMQAVGNGFLTAYAPIVERRKDTVYGEHERQFQLYRRGRYVEFNLVYDRGTLFGLQTGGRTESILMSMPPLVRWEYAYTPEAGSAEAALYSDYLKPRDWLTL.

S94 lines the substrate pocket. A divalent metal cation contacts are provided by H98 and H108. Catalysis depends on H108, which acts as the Proton donor. 110 to 112 (NVR) provides a ligand contact to substrate. A divalent metal cation is bound by residues H147 and H177. The interval 242 to 277 (YVEFNLVYDRGTLFGLQTGGRTESILMSMPPLVRWE) is important for dimerization. 260–262 (GGR) is a substrate binding site.

Belongs to the aerobic coproporphyrinogen-III oxidase family. Homodimer. A divalent metal cation serves as cofactor.

Its subcellular location is the cytoplasm. The catalysed reaction is coproporphyrinogen III + O2 + 2 H(+) = protoporphyrinogen IX + 2 CO2 + 2 H2O. Its pathway is porphyrin-containing compound metabolism; protoporphyrin-IX biosynthesis; protoporphyrinogen-IX from coproporphyrinogen-III (O2 route): step 1/1. In terms of biological role, involved in the heme biosynthesis. Catalyzes the aerobic oxidative decarboxylation of propionate groups of rings A and B of coproporphyrinogen-III to yield the vinyl groups in protoporphyrinogen-IX. The polypeptide is Oxygen-dependent coproporphyrinogen-III oxidase (Shewanella halifaxensis (strain HAW-EB4)).